The chain runs to 482 residues: Methylenetetrahydrofolate--tRNA-(uracil-5-)-methyltransferase TrmFO (482 aa).

FAD is bound at residue 11 to 16 (GGGLAG). Positions 450–482 (LRQPSPWSAEDSPRAALPIPEPTPLGPASGSSE) are disordered.

The protein belongs to the MnmG family. TrmFO subfamily. FAD is required as a cofactor.

Its subcellular location is the cytoplasm. The enzyme catalyses uridine(54) in tRNA + (6R)-5,10-methylene-5,6,7,8-tetrahydrofolate + NADH + H(+) = 5-methyluridine(54) in tRNA + (6S)-5,6,7,8-tetrahydrofolate + NAD(+). The catalysed reaction is uridine(54) in tRNA + (6R)-5,10-methylene-5,6,7,8-tetrahydrofolate + NADPH + H(+) = 5-methyluridine(54) in tRNA + (6S)-5,6,7,8-tetrahydrofolate + NADP(+). Its function is as follows. Catalyzes the folate-dependent formation of 5-methyl-uridine at position 54 (M-5-U54) in all tRNAs. The protein is Methylenetetrahydrofolate--tRNA-(uracil-5-)-methyltransferase TrmFO of Rhodospirillum rubrum (strain ATCC 11170 / ATH 1.1.1 / DSM 467 / LMG 4362 / NCIMB 8255 / S1).